A 619-amino-acid polypeptide reads, in one-letter code: Eukaryotic translation initiation factor 2-alpha kinase 1 (619 aa).

A disordered region spans residues 1-40 (MLGGSSVDGERDTDDDAAGAVAAPPAIDFPAEVSDPKYDE). Positions 18 to 28 (AGAVAAPPAID) are enriched in low complexity. Residues 85–104 (LHSKQVFKLLCQTFIKMGLL) carry the SIFI-degron motif. The Protein kinase domain maps to 167–580 (FEELAILGKG…ALQLLQSELF (414 aa)). ATP-binding positions include 173 to 181 (LGKGGYGRV) and lysine 196. Threonine 283 carries the post-translational modification Phosphothreonine. An HRM 1 repeat occupies 408-413 (ACPYVM). The active-site Proton acceptor is the aspartate 440. Phosphothreonine; by autocatalysis is present on residues threonine 483, threonine 485, and threonine 490. The HRM 2 repeat unit spans residues 549-554 (RCPVQA).

The protein belongs to the protein kinase superfamily. Ser/Thr protein kinase family. GCN2 subfamily. Synthesized in an inactive form that binds to the N-terminal domain of CDC37. Has to be associated with a multiprotein complex containing Hsp90, CDC37 and PPP5C for maturation and activation by autophosphorylation. The phosphatase PPP5C modulates this activation. Homodimer; homodimerizes in presence of heme, forming a disulfide-linked inactive homodimer. Interacts with DELE1; binds both to full-length DELE1 and processed form of DELE1 (S-DELE1) in response to stress, leading to activate its protein kinase activity and trigger the integrated stress response (ISR). In terms of processing, activated by autophosphorylation; phosphorylated predominantly on serine and threonine residues, but also on tyrosine residues. Autophosphorylation at Thr-485 is required for kinase activation. The active autophosphorylated form apparently is largely refractory to cellular heme fluctuations. Ubiquitinated and degraded by the SIFI complex once the mitochondrial stress has been resolved, thereby providing stress response silencing. Within the SIFI complex, UBR4 initiates ubiquitin chain that are further elongated or branched by KCMF1. As to expression, expressed predominantly in erythroid cells, mature reticulocytes, as well as fetal liver nucleated erythroid cells. At much lower levels, expressed in hepatocytes and bone marrow-derived macrophages (at protein level).

It is found in the cytoplasm. It catalyses the reaction L-seryl-[protein] + ATP = O-phospho-L-seryl-[protein] + ADP + H(+). The enzyme catalyses L-threonyl-[protein] + ATP = O-phospho-L-threonyl-[protein] + ADP + H(+). Its activity is regulated as follows. In normal conditions, the protein kinase activity is inhibited; inhibition is relieved by various stress conditions. Inhibited by heme: in presence of heme, forms a disulfide-linked inactive homodimer. Heme depletion relieves inhibition and stimulates kinase activity by autophosphorylation. Inhibited by the heme metabolites biliverdin and bilirubin. Induced by oxidative stress generated by arsenite treatment. Binding of nitric oxide (NO) to the heme iron in the N-terminal heme-binding domain activates the kinase activity, while binding of carbon monoxide (CO) suppresses kinase activity. Protein kinase activity is also activated upon binding to DELE1 in response to various stress, triggering the integrated stress response (ISR): activated by full-length DELE1 in response to iron deficiency, while it is activated by the processed form of DELE1 (S-DELE1) in response to mitochondrial stress. Functionally, metabolic-stress sensing protein kinase that phosphorylates the alpha subunit of eukaryotic translation initiation factor 2 (EIF2S1/eIF-2-alpha) in response to various stress conditions. Key activator of the integrated stress response (ISR) required for adaptation to various stress, such as heme deficiency, oxidative stress, osmotic shock, mitochondrial dysfunction and heat shock. EIF2S1/eIF-2-alpha phosphorylation in response to stress converts EIF2S1/eIF-2-alpha in a global protein synthesis inhibitor, leading to a global attenuation of cap-dependent translation, while concomitantly initiating the preferential translation of ISR-specific mRNAs, such as the transcriptional activator ATF4, and hence allowing ATF4-mediated reprogramming. Acts as a key sensor of heme-deficiency: in normal conditions, binds hemin via a cysteine thiolate and histidine nitrogenous coordination, leading to inhibit the protein kinase activity. This binding occurs with moderate affinity, allowing it to sense the heme concentration within the cell: heme depletion relieves inhibition and stimulates kinase activity, activating the ISR. Thanks to this unique heme-sensing capacity, plays a crucial role to shut off protein synthesis during acute heme-deficient conditions. In red blood cells (RBCs), controls hemoglobin synthesis ensuring a coordinated regulation of the synthesis of its heme and globin moieties. It thereby plays an essential protective role for RBC survival in anemias of iron deficiency. Iron deficiency also triggers activation by full-length DELE1. Also activates the ISR in response to mitochondrial dysfunction: HRI/EIF2AK1 protein kinase activity is activated upon binding to the processed form of DELE1 (S-DELE1), thereby promoting the ATF4-mediated reprogramming. Also acts as an activator of mitophagy in response to mitochondrial damage: catalyzes phosphorylation of eIF-2-alpha (EIF2S1) following activation by S-DELE1, thereby promoting mitochondrial localization of EIF2S1, triggering PRKN-independent mitophagy. The protein is Eukaryotic translation initiation factor 2-alpha kinase 1 of Mus musculus (Mouse).